Reading from the N-terminus, the 156-residue chain is UPF0266 membrane protein YobD (156 aa).

The Periplasmic portion of the chain corresponds to 1–5; sequence MTITD. A helical transmembrane segment spans residues 6–26; it reads LVLILFIAALLAYALYDQFIM. The Cytoplasmic portion of the chain corresponds to 27-44; that stretch reads PRRNGPTLLSIALLRRGR. The helical transmembrane segment at 45–65 threads the bilayer; it reads VDSVIFVGLVAILIYNNVTSH. Gly66 is a topological domain (periplasmic). The chain crosses the membrane as a helical span at residues 67–87; that stretch reads AQMTTWLLSALALMGFYIFWI. Over 88–156 the chain is Cytoplasmic; it reads RTPRIIFKQR…LLIENQYLKI (69 aa).

The protein belongs to the UPF0266 family.

It localises to the cell inner membrane. The polypeptide is UPF0266 membrane protein YobD (yobD) (Salmonella typhimurium (strain LT2 / SGSC1412 / ATCC 700720)).